The following is a 323-amino-acid chain: GTP 3',8-cyclase (323 aa).

Positions 4-233 (KYGREIDYLR…NGPAKYISIE (230 aa)) constitute a Radical SAM core domain. A GTP-binding site is contributed by R13. Residues C20 and C24 each coordinate [4Fe-4S] cluster. Position 26 (Y26) interacts with S-adenosyl-L-methionine. C27 serves as a coordination point for [4Fe-4S] cluster. A GTP-binding site is contributed by R63. G67 is a binding site for S-adenosyl-L-methionine. Position 94 (T94) interacts with GTP. S118 contributes to the S-adenosyl-L-methionine binding site. Position 154 (K154) interacts with GTP. Position 188 (M188) interacts with S-adenosyl-L-methionine. [4Fe-4S] cluster is bound by residues C250 and C253. 255-257 (RIR) is a GTP binding site. Residue C267 participates in [4Fe-4S] cluster binding.

This sequence belongs to the radical SAM superfamily. MoaA family. Monomer and homodimer. [4Fe-4S] cluster serves as cofactor.

It carries out the reaction GTP + AH2 + S-adenosyl-L-methionine = (8S)-3',8-cyclo-7,8-dihydroguanosine 5'-triphosphate + 5'-deoxyadenosine + L-methionine + A + H(+). Its pathway is cofactor biosynthesis; molybdopterin biosynthesis. Its function is as follows. Catalyzes the cyclization of GTP to (8S)-3',8-cyclo-7,8-dihydroguanosine 5'-triphosphate. This Clostridium perfringens (strain SM101 / Type A) protein is GTP 3',8-cyclase.